The following is a 154-amino-acid chain: Transcriptional repressor NrdR (154 aa).

Residues Cys-3–Cys-34 fold into a zinc finger. The region spanning Leu-46–Asp-136 is the ATP-cone domain.

Belongs to the NrdR family. The cofactor is Zn(2+).

Functionally, negatively regulates transcription of bacterial ribonucleotide reductase nrd genes and operons by binding to NrdR-boxes. The sequence is that of Transcriptional repressor NrdR from Rhodococcus jostii (strain RHA1).